Reading from the N-terminus, the 127-residue chain is Putative 2Fe-2S ferredoxin (127 aa).

Cysteine 23, cysteine 54, and cysteine 58 together coordinate [2Fe-2S] cluster.

The protein belongs to the 2Fe2S Shethna-type ferredoxin family. It depends on [2Fe-2S] cluster as a cofactor.

Ferredoxins are iron-sulfur proteins that transfer electrons in a wide variety of metabolic reactions. The polypeptide is Putative 2Fe-2S ferredoxin (cbiW) (Priestia megaterium (Bacillus megaterium)).